Reading from the N-terminus, the 146-residue chain is Basic phospholipase A2 paradoxin-like alpha chain (146 aa).

The N-terminal stretch at 1-27 (MHPAHLLVLLAVCVSLLGASDIPPLPL) is a signal peptide. Intrachain disulfides connect C38–C99, C54–C145, C56–C72, C71–C126, C78–C119, C88–C112, and C106–C117. Residues Y55, G57, and G59 each coordinate Ca(2+). Residue H75 is part of the active site. Ca(2+) is bound at residue D76. The active site involves D120.

The protein belongs to the phospholipase A2 family. Group I subfamily. D49 sub-subfamily. Heterotrimer of alpha, beta, and gamma chains; non-covalently linked. Ca(2+) serves as cofactor. Expressed by the venom gland.

The protein localises to the secreted. The catalysed reaction is a 1,2-diacyl-sn-glycero-3-phosphocholine + H2O = a 1-acyl-sn-glycero-3-phosphocholine + a fatty acid + H(+). In terms of biological role, heterotrimer: Snake venom phospholipase A2 (PLA2) heterotrimer that acts as a potent presynaptic neurotoxin by blocking synaptic transmission and synaptic vesicle recycling. May act by binding in a calcium-dependent fashion to neurotonal pentraxin-1 (NPTX1) and neurotonal pentraxin-2 (NPTX2), but not to neuronal pentraxin receptor (NPTXR). Also binds to taipoxin-associated calcium binding protein 49 (RCN2), a protein localized in the lumen of endoplasmic reticulum. Monomer (alpha chain): Snake venom phospholipase A2 (PLA2) alpha chain that possesses the same high enzymatic activity than the heterotrimer. PLA2 catalyzes the calcium-dependent hydrolysis of the 2-acyl groups in 3-sn-phosphoglycerides. The chain is Basic phospholipase A2 paradoxin-like alpha chain from Oxyuranus microlepidotus (Inland taipan).